Here is a 273-residue protein sequence, read N- to C-terminus: Dermonecrotic toxin LdSicTox-alphaIB1bii (273 aa).

Residue H5 is part of the active site. Mg(2+) contacts are provided by E25 and D27. Catalysis depends on H41, which acts as the Nucleophile. 2 disulfide bridges follow: C45-C51 and C47-C190. D85 lines the Mg(2+) pocket. N-linked (GlcNAc...) asparagine glycosylation occurs at N250.

Belongs to the arthropod phospholipase D family. Class II subfamily. It depends on Mg(2+) as a cofactor. In terms of tissue distribution, expressed by the venom gland.

It localises to the secreted. The catalysed reaction is an N-(acyl)-sphingosylphosphocholine = an N-(acyl)-sphingosyl-1,3-cyclic phosphate + choline. It carries out the reaction an N-(acyl)-sphingosylphosphoethanolamine = an N-(acyl)-sphingosyl-1,3-cyclic phosphate + ethanolamine. It catalyses the reaction a 1-acyl-sn-glycero-3-phosphocholine = a 1-acyl-sn-glycero-2,3-cyclic phosphate + choline. The enzyme catalyses a 1-acyl-sn-glycero-3-phosphoethanolamine = a 1-acyl-sn-glycero-2,3-cyclic phosphate + ethanolamine. Functionally, dermonecrotic toxins cleave the phosphodiester linkage between the phosphate and headgroup of certain phospholipids (sphingolipid and lysolipid substrates), forming an alcohol (often choline) and a cyclic phosphate. This toxin acts on sphingomyelin (SM). It may also act on ceramide phosphoethanolamine (CPE), lysophosphatidylcholine (LPC) and lysophosphatidylethanolamine (LPE), but not on lysophosphatidylserine (LPS), and lysophosphatidylglycerol (LPG). It acts by transphosphatidylation, releasing exclusively cyclic phosphate products as second products. Induces dermonecrosis, hemolysis, increased vascular permeability, edema, inflammatory response, and platelet aggregation. This Loxosceles deserta (Desert recluse spider) protein is Dermonecrotic toxin LdSicTox-alphaIB1bii.